A 373-amino-acid chain; its full sequence is C-C chemokine receptor type 2 (373 aa).

The Extracellular portion of the chain corresponds to 1–55 (MEDNNMLPQFIHGILSTSHSLFTRSIQELDEGATTPYDYDDGEPCHKTSVKQIGA). The chain crosses the membrane as a helical span at residues 56–83 (WILPPLYSLVFIFGFVGNMLVIIILIGC). Residues 84 to 93 (KKLKSMTDIY) are Cytoplasmic-facing. The chain crosses the membrane as a helical span at residues 94-114 (LLNLAISDLLFLLTLPFWAHY). Over 115 to 127 (AANEWVFGNIMCK) the chain is Extracellular. Residues Cys-126 and Cys-203 are joined by a disulfide bond. Residues 128–149 (VFTGLYHIGYFGGIFFIILLTI) traverse the membrane as a helical segment. Topologically, residues 150–166 (DRYLAIVHAVFALKART) are cytoplasmic. Tyr-152 is subject to Phosphotyrosine; by JAK2. A helical transmembrane segment spans residues 167 to 191 (VTFGVITSVVTWVVAVFASLPGIIF). Over 192–219 (TKSKQDDHHYTCGPYFTQLWKNFQTIMR) the chain is Extracellular. A helical membrane pass occupies residues 220-239 (NILSLILPLLVMVICYSGIL). The Cytoplasmic portion of the chain corresponds to 240–256 (HTLFRCRNEKKRHRAVR). The chain crosses the membrane as a helical span at residues 257-281 (LIFAIMIVYFLFWTPYNIVLFLTTF). Residues 282-298 (QESLGMSNCVIDKHLDQ) are Extracellular-facing. The chain crosses the membrane as a helical span at residues 299–322 (AMQVTETLGMTHCCINPVIYAFVG). Residues 323–373 (EKFRRYLSIFFRKHIAKRLCKQCPVFYRETADRVSSTFTPSTGEQEVSVGL) lie on the Cytoplasmic side of the membrane.

This sequence belongs to the G-protein coupled receptor 1 family. Interacts with ARRB1. Interacts (via extracellular N-terminal region) with beta-defensin DEFB106A/DEFB106B; this interaction may preferentially require specific tyrosine sulfation on CCR2. Interacts with NUP85; the interaction is required for CCR2 clusters formation on the cell membrane and CCR2 signaling. Post-translationally, N-glycosylated. In terms of processing, sulfation increases the affinity for both monomeric and dimeric CCL2 with stronger binding to the monomeric form. Binding of sulfated CCR2 to CCL2 promotes conversion of CCL2 from dimer to monomer. In terms of tissue distribution, epressed in mature thymocytes. Detected in monocyte/macrophage cell lines, but not in nonhematopoietic cell lines.

The protein localises to the cell membrane. In terms of biological role, key functional receptor for CCL2 but can also bind CCL7 and CCL12 chemokines. Its binding with CCL2 on monocytes and macrophages mediates chemotaxis and migration induction through the activation of the PI3K cascade, the small G protein Rac and lamellipodium protrusion. Also acts as a receptor for the beta-defensin DEFB106A/DEFB106B. Regulates the expression of T-cell inflammatory cytokines and T-cell differentiation, promoting the differentiation of T-cells into T-helper 17 cells (Th17) during inflammation. Facilitates the export of mature thymocytes by enhancing directional movement of thymocytes to sphingosine-1-phosphate stimulation and up-regulation of S1P1R expression; signals through the JAK-STAT pathway to regulate FOXO1 activity leading to an increased expression of S1P1R. Plays an important role in mediating peripheral nerve injury-induced neuropathic pain. Increases NMDA-mediated synaptic transmission in both dopamine D1 and D2 receptor-containing neurons, which may be caused by MAPK/ERK-dependent phosphorylation of GRIN2B/NMDAR2B. Mediates the recruitment of macrophages and monocytes to the injury site following brain injury. This Mus musculus (Mouse) protein is C-C chemokine receptor type 2 (Ccr2).